We begin with the raw amino-acid sequence, 141 residues long: Pancreatic progenitor cell differentiation and proliferation factor-like protein (141 aa).

The segment at 72–141 (DQSACGGNGP…GAPKDTNSPQ (70 aa)) is disordered. A compositionally biased stretch (low complexity) spans 95-105 (SLLQQEESQLL). Polar residues predominate over residues 112–122 (GTVNRFRNSQT).

It belongs to the PPDPF family.

This Bos taurus (Bovine) protein is Pancreatic progenitor cell differentiation and proliferation factor-like protein.